The sequence spans 344 residues: L-rhamnose-proton symporter (344 aa).

Helical transmembrane passes span 4 to 24, 38 to 58, 68 to 88, 101 to 121, 137 to 157, 175 to 195, 214 to 234, 259 to 279, 290 to 310, and 321 to 341; these read AITMGIFWHLIGAASAACFYA, WSVGGIVSWLILPWAISALLL, FNLSTLLPVFLFGAMWGIGNI, MGIGIAIGITLIVGTLMTPII, TLLGVFVALIGVGIVTRAGQL, LLLAVMCGIFSAGMSFAMNAA, LPSYVVIMGGGALVNLGFCFI, ILLSALGGLMWYLQFFFYAWG, MSWMLHMSFYVLCGGLVGLVL, and VAVLSLGCVVIIIAANIVGLG.

This sequence belongs to the L-rhamnose transporter (TC 2.A.7.6) family.

The protein resides in the cell inner membrane. It carries out the reaction L-rhamnopyranose(in) + H(+)(in) = L-rhamnopyranose(out) + H(+)(out). Uptake of L-rhamnose across the cytoplasmic membrane with the concomitant transport of protons into the cell (symport system). In Salmonella dublin (strain CT_02021853), this protein is L-rhamnose-proton symporter.